The following is a 470-amino-acid chain: Poly(A) polymerase catalytic subunit (470 aa).

Active-site residues include Asp-192 and Asp-194.

The protein belongs to the poxviridae poly(A) polymerase catalytic subunit family. As to quaternary structure, heterodimer of a large (catalytic) subunit and a small (regulatory) subunit.

The catalysed reaction is RNA(n) + ATP = RNA(n)-3'-adenine ribonucleotide + diphosphate. In terms of biological role, polymerase that creates the 3'-poly(A) tail of mRNA's. The protein is Poly(A) polymerase catalytic subunit (PAPL) of Oryctolagus cuniculus (Rabbit).